The sequence spans 320 residues: Acetyl-coenzyme A carboxylase carboxyl transferase subunit alpha (320 aa).

Residues 33 to 294 (AFESEIQALR…GDAVEDELKA (262 aa)) form the CoA carboxyltransferase C-terminal domain.

It belongs to the AccA family. Acetyl-CoA carboxylase is a heterohexamer composed of biotin carboxyl carrier protein (AccB), biotin carboxylase (AccC) and two subunits each of ACCase subunit alpha (AccA) and ACCase subunit beta (AccD).

It is found in the cytoplasm. It carries out the reaction N(6)-carboxybiotinyl-L-lysyl-[protein] + acetyl-CoA = N(6)-biotinyl-L-lysyl-[protein] + malonyl-CoA. The protein operates within lipid metabolism; malonyl-CoA biosynthesis; malonyl-CoA from acetyl-CoA: step 1/1. Its function is as follows. Component of the acetyl coenzyme A carboxylase (ACC) complex. First, biotin carboxylase catalyzes the carboxylation of biotin on its carrier protein (BCCP) and then the CO(2) group is transferred by the carboxyltransferase to acetyl-CoA to form malonyl-CoA. This is Acetyl-coenzyme A carboxylase carboxyl transferase subunit alpha from Caulobacter sp. (strain K31).